The primary structure comprises 43 residues: KKQTGFTPFIGNGFSLDVPXSITEYGPXEKXEDNFDATNNLFV.

Belongs to the PsbP family.

It localises to the plastid. The protein resides in the chloroplast thylakoid membrane. Functionally, may be involved in the regulation of photosystem II. This chain is Oxygen-evolving enhancer protein 2, found in Physcomitrium patens (Spreading-leaved earth moss).